We begin with the raw amino-acid sequence, 944 residues long: Nonsense-mediated mRNA decay factor SMG8 (944 aa).

Disordered regions lie at residues N560 to A597 and Q628 to N653. Acidic residues predominate over residues Q568–Q583. Over residues Q628–D650 the composition is skewed to polar residues.

Belongs to the SMG8 family.

Functionally, involved in nonsense-mediated decay (NMD) of mRNAs containing premature stop codons. Probable component of kinase complex containing nonC and recruited to stalled ribosomes. The polypeptide is Nonsense-mediated mRNA decay factor SMG8 (Drosophila simulans (Fruit fly)).